A 351-amino-acid chain; its full sequence is Photosystem II D2 protein (351 aa).

The helical transmembrane segment at 39 to 59 threads the bilayer; that stretch reads CAYLAVGGWLTGTTFVTSWYT. Chlorophyll a is bound at residue His116. A helical transmembrane segment spans residues 123 to 139; it reads GFCLRQFEIARLVGLRP. Residues Gln128 and Asn141 each contribute to the pheophytin a site. A helical membrane pass occupies residues 151-164; that stretch reads VFVSVFLMYPLGQA. Position 196 (His196) interacts with chlorophyll a. Residues 206–226 traverse the membrane as a helical segment; it reads GALLCAIHGATVQNTLFEDGD. His213 and Phe260 together coordinate a plastoquinone. His213 is a binding site for Fe cation. Residue His267 participates in Fe cation binding. Residues 277–293 traverse the membrane as a helical segment; the sequence is GLWTSAFGIVGLALNLR.

The protein belongs to the reaction center PufL/M/PsbA/D family. As to quaternary structure, PSII is composed of 1 copy each of membrane proteins PsbA, PsbB, PsbC, PsbD, PsbE, PsbF, PsbH, PsbI, PsbJ, PsbK, PsbL, PsbM, PsbT, PsbX, PsbY, PsbZ, Psb30/Ycf12, at least 3 peripheral proteins of the oxygen-evolving complex and a large number of cofactors. It forms dimeric complexes. The D1/D2 heterodimer binds P680, chlorophylls that are the primary electron donor of PSII, and subsequent electron acceptors. It shares a non-heme iron and each subunit binds pheophytin, quinone, additional chlorophylls, carotenoids and lipids. There is also a Cl(-1) ion associated with D1 and D2, which is required for oxygen evolution. The PSII complex binds additional chlorophylls, carotenoids and specific lipids. is required as a cofactor.

Its subcellular location is the plastid. It is found in the chloroplast thylakoid membrane. It catalyses the reaction 2 a plastoquinone + 4 hnu + 2 H2O = 2 a plastoquinol + O2. Photosystem II (PSII) is a light-driven water:plastoquinone oxidoreductase that uses light energy to abstract electrons from H(2)O, generating O(2) and a proton gradient subsequently used for ATP formation. It consists of a core antenna complex that captures photons, and an electron transfer chain that converts photonic excitation into a charge separation. The D1/D2 (PsbA/PsbD) reaction center heterodimer binds P680, the primary electron donor of PSII as well as several subsequent electron acceptors. D2 is needed for assembly of a stable PSII complex. This Porphyra purpurea (Red seaweed) protein is Photosystem II D2 protein.